A 335-amino-acid polypeptide reads, in one-letter code: Anthranilate phosphoribosyltransferase (335 aa).

Residues Gly-79, 82-83 (GD), Thr-87, 89-92 (NIST), 107-115 (KHGSRSVSS), and Ser-119 contribute to the 5-phospho-alpha-D-ribose 1-diphosphate site. Position 79 (Gly-79) interacts with anthranilate. Mg(2+) is bound at residue Ser-91. Anthranilate is bound at residue Arg-165. Mg(2+) is bound by residues Asp-223 and Glu-224.

The protein belongs to the anthranilate phosphoribosyltransferase family. As to quaternary structure, homodimer. It depends on Mg(2+) as a cofactor.

It catalyses the reaction N-(5-phospho-beta-D-ribosyl)anthranilate + diphosphate = 5-phospho-alpha-D-ribose 1-diphosphate + anthranilate. It participates in amino-acid biosynthesis; L-tryptophan biosynthesis; L-tryptophan from chorismate: step 2/5. Catalyzes the transfer of the phosphoribosyl group of 5-phosphorylribose-1-pyrophosphate (PRPP) to anthranilate to yield N-(5'-phosphoribosyl)-anthranilate (PRA). The chain is Anthranilate phosphoribosyltransferase from Helicobacter pylori (strain G27).